A 500-amino-acid chain; its full sequence is Lariat debranching enzyme (500 aa).

The interval 1–25 is disordered; the sequence is MSSKNPVDEQPCCGSHEGSHQDPAP. The a divalent metal cation site is built by cysteine 48, histidine 50, aspartate 79, and asparagine 124. Positions 164–194 are lariat recognition loop; that stretch reads SGIFSQGDFQFSHYERPSFSERDVKSAYHVR. Positions 222, 274, and 276 each coordinate a divalent metal cation. Positions 453–500 are disordered; sequence DDANAKPNQDDVDFGDEDFVIDRGHTSDEPEAKKSRLDEDKFEAVPSE. Acidic residues predominate over residues 462 to 471; sequence DDVDFGDEDF. Basic and acidic residues predominate over residues 472 to 500; that stretch reads VIDRGHTSDEPEAKKSRLDEDKFEAVPSE.

This sequence belongs to the lariat debranching enzyme family. Fe(2+) is required as a cofactor. Requires Zn(2+) as cofactor. Mn(2+) serves as cofactor.

The protein resides in the nucleus. With respect to regulation, active in presence of diverse metals including Fe(2+), Zn(2+), Mn(2+). Binds two metal cations in two adjacent alpha and beta metal-binding pockets. Functionally, cleaves the 2'-5' phosphodiester linkage at the branch point of lariat intron pre-mRNAs after splicing and converts them into linear molecules that are subsequently degraded. It thereby facilitates ribonucleotide turnover. In Caenorhabditis elegans, this protein is Lariat debranching enzyme.